A 641-amino-acid polypeptide reads, in one-letter code: Threonine--tRNA ligase (641 aa).

Residues 1–61 (MPIITLPDGT…TQNSHIQIIT (61 aa)) enclose the TGS domain. The interval 242–533 (DHRKLGKKYS…LIENYSGNFP (292 aa)) is catalytic. Zn(2+) contacts are provided by C333, H384, and H510.

It belongs to the class-II aminoacyl-tRNA synthetase family. In terms of assembly, homodimer. Requires Zn(2+) as cofactor.

The protein resides in the cytoplasm. The enzyme catalyses tRNA(Thr) + L-threonine + ATP = L-threonyl-tRNA(Thr) + AMP + diphosphate + H(+). Functionally, catalyzes the attachment of threonine to tRNA(Thr) in a two-step reaction: L-threonine is first activated by ATP to form Thr-AMP and then transferred to the acceptor end of tRNA(Thr). Also edits incorrectly charged L-seryl-tRNA(Thr). In Prochlorococcus marinus (strain NATL2A), this protein is Threonine--tRNA ligase.